Consider the following 328-residue polypeptide: Tetraacyldisaccharide 4'-kinase (328 aa).

55–62 contributes to the ATP binding site; it reads TAGGNGKT.

The protein belongs to the LpxK family.

It carries out the reaction a lipid A disaccharide + ATP = a lipid IVA + ADP + H(+). It participates in glycolipid biosynthesis; lipid IV(A) biosynthesis; lipid IV(A) from (3R)-3-hydroxytetradecanoyl-[acyl-carrier-protein] and UDP-N-acetyl-alpha-D-glucosamine: step 6/6. Functionally, transfers the gamma-phosphate of ATP to the 4'-position of a tetraacyldisaccharide 1-phosphate intermediate (termed DS-1-P) to form tetraacyldisaccharide 1,4'-bis-phosphate (lipid IVA). This Escherichia coli O7:K1 (strain IAI39 / ExPEC) protein is Tetraacyldisaccharide 4'-kinase.